The primary structure comprises 349 residues: Cobalt-precorrin-5B C(1)-methyltransferase (349 aa).

Belongs to the CbiD family.

The enzyme catalyses Co-precorrin-5B + S-adenosyl-L-methionine = Co-precorrin-6A + S-adenosyl-L-homocysteine. It functions in the pathway cofactor biosynthesis; adenosylcobalamin biosynthesis; cob(II)yrinate a,c-diamide from sirohydrochlorin (anaerobic route): step 6/10. In terms of biological role, catalyzes the methylation of C-1 in cobalt-precorrin-5B to form cobalt-precorrin-6A. The polypeptide is Cobalt-precorrin-5B C(1)-methyltransferase (Saccharolobus islandicus (strain M.16.27) (Sulfolobus islandicus)).